Consider the following 269-residue polypeptide: Ribosomal RNA small subunit methyltransferase A (269 aa).

Residues H11, L13, G38, E59, D84, and N105 each contribute to the S-adenosyl-L-methionine site.

The protein belongs to the class I-like SAM-binding methyltransferase superfamily. rRNA adenine N(6)-methyltransferase family. RsmA subfamily.

The protein localises to the cytoplasm. The enzyme catalyses adenosine(1518)/adenosine(1519) in 16S rRNA + 4 S-adenosyl-L-methionine = N(6)-dimethyladenosine(1518)/N(6)-dimethyladenosine(1519) in 16S rRNA + 4 S-adenosyl-L-homocysteine + 4 H(+). Its function is as follows. Specifically dimethylates two adjacent adenosines (A1518 and A1519) in the loop of a conserved hairpin near the 3'-end of 16S rRNA in the 30S particle. May play a critical role in biogenesis of 30S subunits. This chain is Ribosomal RNA small subunit methyltransferase A, found in Acaryochloris marina (strain MBIC 11017).